A 25-amino-acid chain; its full sequence is Xenoposin precursor fragment BM3 (25 aa).

As to expression, expressed by the skin glands.

It is found in the secreted. Functionally, antimicrobial peptide. The polypeptide is Xenoposin precursor fragment BM3 (Xenopus boumbaensis (Mawa clawed frog)).